A 978-amino-acid chain; its full sequence is Copper-transporting ATPase HMA4 (978 aa).

Positions 1 to 11 (MEQNGENHLKD) are enriched in basic and acidic residues. Residues 1–35 (MEQNGENHLKDPLLQADGGGSGASPAGASPRKERK) form a disordered region. HMA domains follow at residues 37-103 (RKVM…FEVD), 111-177 (AVCR…FGAD), and 186-252 (NKVH…QPPK). Residues Cys-48, Cys-51, Cys-122, and Cys-125 each contribute to the Cu(+) site. 8 helical membrane passes run 280 to 300 (FLWSCLFSVPVFMFSMVLPMI), 315 to 335 (MTIGMLLRWLLCSPVQFIIGW), 352 to 372 (MDVLVALGTNAAYFYSVYIVL), 385 to 405 (FFETSAMLISFILLGKYLEVV), 545 to 565 (FFVPTVVVAAFLTWLGWFVAG), 584 to 604 (LALQFGISVLVVACPCALGLA), 907 to 927 (VWALGYNVLGMPVAAGVLFPF), and 935 to 955 (WLAGACMAASSVSVVCSSLLL).

It belongs to the cation transport ATPase (P-type) (TC 3.A.3) family. Type IB subfamily. As to expression, highly expressed in roots. Expressed in vascular tissues of the stele, mainly in pericycle cells.

The protein localises to the vacuole membrane. The catalysed reaction is Cu(+)(in) + ATP + H2O = Cu(+)(out) + ADP + phosphate + H(+). Its function is as follows. Copper (Cu) transporter that mediates Cu transport in root vacuoles. Involved in Cu detoxification by sequestrating Cu into root vacuoles and limiting translocation of Cu from the roots to the shoots, and accumulation in grains. This is Copper-transporting ATPase HMA4 from Oryza sativa subsp. japonica (Rice).